We begin with the raw amino-acid sequence, 441 residues long: Glutamate-1-semialdehyde 2,1-aminomutase (441 aa).

An N6-(pyridoxal phosphate)lysine modification is found at Lys-273.

Belongs to the class-III pyridoxal-phosphate-dependent aminotransferase family. HemL subfamily. Pyridoxal 5'-phosphate serves as cofactor.

It localises to the cytoplasm. It carries out the reaction (S)-4-amino-5-oxopentanoate = 5-aminolevulinate. The protein operates within porphyrin-containing compound metabolism; protoporphyrin-IX biosynthesis; 5-aminolevulinate from L-glutamyl-tRNA(Glu): step 2/2. The protein is Glutamate-1-semialdehyde 2,1-aminomutase of Pyrobaculum calidifontis (strain DSM 21063 / JCM 11548 / VA1).